The sequence spans 518 residues: ATP synthase subunit beta 2 (518 aa).

154–161 (GGAGVGKT) is an ATP binding site. Residues 455 to 518 (IDEAKGKAKP…TDHAADTHES (64 aa)) are disordered. Composition is skewed to basic and acidic residues over residues 473–485 (PDSKTEARADPKP) and 507–518 (PETDHAADTHES).

This sequence belongs to the ATPase alpha/beta chains family. As to quaternary structure, F-type ATPases have 2 components, CF(1) - the catalytic core - and CF(0) - the membrane proton channel. CF(1) has five subunits: alpha(3), beta(3), gamma(1), delta(1), epsilon(1). CF(0) has three main subunits: a(1), b(2) and c(9-12). The alpha and beta chains form an alternating ring which encloses part of the gamma chain. CF(1) is attached to CF(0) by a central stalk formed by the gamma and epsilon chains, while a peripheral stalk is formed by the delta and b chains.

It localises to the cell inner membrane. The enzyme catalyses ATP + H2O + 4 H(+)(in) = ADP + phosphate + 5 H(+)(out). Produces ATP from ADP in the presence of a proton gradient across the membrane. The catalytic sites are hosted primarily by the beta subunits. The protein is ATP synthase subunit beta 2 of Albidiferax ferrireducens (strain ATCC BAA-621 / DSM 15236 / T118) (Rhodoferax ferrireducens).